We begin with the raw amino-acid sequence, 338 residues long: Mitochondrial E3 ubiquitin protein ligase 1 (338 aa).

The Cytoplasmic portion of the chain corresponds to 1–3 (MEF). Residues 4–24 (LHESVALGVDLLILGLCAREY) form a helical membrane-spanning segment. Topologically, residues 25–227 (VHYKRTAKVL…LIKRFEDAKT (203 aa)) are mitochondrial intermembrane. A helical membrane pass occupies residues 228-248 (TTILKLVVCSTISAILVAFIA). At 249–338 (KKLYRKRKQE…IVSKAAAFIA (90 aa)) the chain is on the cytoplasmic side. Residues 290-326 (CVVCSTNPKEIILLPCGHVCLCEDCAQKISVTCPVCR) form an RING-type zinc finger.

In terms of assembly, interacts with Marf. In terms of processing, auto-ubiquitinated.

Its subcellular location is the mitochondrion outer membrane. It catalyses the reaction S-ubiquitinyl-[E2 ubiquitin-conjugating enzyme]-L-cysteine + [acceptor protein]-L-lysine = [E2 ubiquitin-conjugating enzyme]-L-cysteine + N(6)-ubiquitinyl-[acceptor protein]-L-lysine.. Its function is as follows. Exhibits weak E3 ubiquitin-protein ligase activity. E3 ubiquitin ligases accept ubiquitin from an E2 ubiquitin-conjugating enzyme in the form of a thioester and then directly transfer the ubiquitin to targeted substrates. Plays a role in the control of mitochondrial morphology by promoting mitochondrial fission. Negatively regulates the mitochondrial fusion protein marf by promoting its ubiquitination, acting in a pathway that is parallel to the park/pink1 regulatory pathway. This is Mitochondrial E3 ubiquitin protein ligase 1 from Drosophila melanogaster (Fruit fly).